Here is a 284-residue protein sequence, read N- to C-terminus: Pantothenate synthetase (284 aa).

30–37 (MGALHEGH) is a binding site for ATP. His-37 (proton donor) is an active-site residue. Gln-61 contributes to the (R)-pantoate binding site. Position 61 (Gln-61) interacts with beta-alanine. 147–150 (GEKD) contacts ATP. Gln-153 is a binding site for (R)-pantoate. ATP contacts are provided by residues Val-176 and 184–187 (TSSR).

Belongs to the pantothenate synthetase family. As to quaternary structure, homodimer.

It is found in the cytoplasm. It catalyses the reaction (R)-pantoate + beta-alanine + ATP = (R)-pantothenate + AMP + diphosphate + H(+). It functions in the pathway cofactor biosynthesis; (R)-pantothenate biosynthesis; (R)-pantothenate from (R)-pantoate and beta-alanine: step 1/1. Catalyzes the condensation of pantoate with beta-alanine in an ATP-dependent reaction via a pantoyl-adenylate intermediate. The protein is Pantothenate synthetase of Chlorobaculum tepidum (strain ATCC 49652 / DSM 12025 / NBRC 103806 / TLS) (Chlorobium tepidum).